The sequence spans 94 residues: Co-chaperonin GroES (94 aa).

The protein belongs to the GroES chaperonin family. As to quaternary structure, heptamer of 7 subunits arranged in a ring. Interacts with the chaperonin GroEL.

It localises to the cytoplasm. In terms of biological role, together with the chaperonin GroEL, plays an essential role in assisting protein folding. The GroEL-GroES system forms a nano-cage that allows encapsulation of the non-native substrate proteins and provides a physical environment optimized to promote and accelerate protein folding. GroES binds to the apical surface of the GroEL ring, thereby capping the opening of the GroEL channel. This chain is Co-chaperonin GroES, found in Lactobacillus gasseri (strain ATCC 33323 / DSM 20243 / BCRC 14619 / CIP 102991 / JCM 1131 / KCTC 3163 / NCIMB 11718 / NCTC 13722 / AM63).